A 139-amino-acid polypeptide reads, in one-letter code: Protein spalt-accessory (139 aa).

The N-terminal stretch at 1 to 16 (MKLLIALLALVTAAIA) is a signal peptide. Over residues 60–75 (GIGQGGVHPGQGGFAG) the composition is skewed to gly residues. The disordered stretch occupies residues 60–139 (GIGQGGVHPG…HHEHHGHHRH (80 aa)). Over residues 109 to 121 (NPHEYPEHHGEHH) the composition is skewed to basic and acidic residues. Residues 122–139 (REHHEHHGHHEHHGHHRH) are compositionally biased toward basic residues.

The protein localises to the secreted. Functionally, likely to be involved in the establishment of the head. The protein is Protein spalt-accessory (sala) of Drosophila simulans (Fruit fly).